Consider the following 138-residue polypeptide: Cysteine desulfuration protein SufE (138 aa).

Cysteine 51 (cysteine persulfide intermediate) is an active-site residue.

This sequence belongs to the SufE family. Homodimer. Interacts with SufS.

It localises to the cytoplasm. It participates in cofactor biosynthesis; iron-sulfur cluster biosynthesis. In terms of biological role, participates in cysteine desulfuration mediated by SufS. Cysteine desulfuration mobilizes sulfur from L-cysteine to yield L-alanine and constitutes an essential step in sulfur metabolism for biosynthesis of a variety of sulfur-containing biomolecules. Functions as a sulfur acceptor for SufS, by mediating the direct transfer of the sulfur atom from the S-sulfanylcysteine of SufS, an intermediate product of cysteine desulfuration process. This Escherichia coli O17:K52:H18 (strain UMN026 / ExPEC) protein is Cysteine desulfuration protein SufE.